A 311-amino-acid polypeptide reads, in one-letter code: Putative dihydroorotate dehydrogenase A (fumarate) (311 aa).

Substrate is bound by residues lysine 45, 69-73 (NSMGL), and asparagine 128. Residue 45-46 (KT) participates in FMN binding. FMN is bound at residue asparagine 128. The Nucleophile role is filled by cysteine 131. Lysine 165 and valine 193 together coordinate FMN. 194-195 (NS) is a binding site for substrate. FMN contacts are provided by residues glycine 220, 248–249 (GG), and 270–271 (GT).

Belongs to the dihydroorotate dehydrogenase family. Type 1 subfamily. As to quaternary structure, homodimer. Requires FMN as cofactor.

Its subcellular location is the cytoplasm. It catalyses the reaction (S)-dihydroorotate + fumarate = orotate + succinate. The protein operates within pyrimidine metabolism; UMP biosynthesis via de novo pathway. Functionally, catalyzes the conversion of dihydroorotate to orotate with fumarate as the electron acceptor. This Streptococcus pyogenes serotype M18 (strain MGAS8232) protein is Putative dihydroorotate dehydrogenase A (fumarate) (pyrD).